The following is an 86-amino-acid chain: MFTSTLLAAATTPLQWSPTVGLIIIIANIIAIAFGKSTIKYPNAEPALPSSNLFGGFGLPALLATTAFGHILGVGAVLGLHNLGRI.

2 consecutive transmembrane segments (helical) span residues 14-34 (LQWS…AIAF) and 57-77 (FGLP…VGAV).

It belongs to the PsaG/PsaK family.

The protein localises to the cellular thylakoid membrane. The sequence is that of Photosystem I reaction center subunit PsaK from Nostoc punctiforme (strain ATCC 29133 / PCC 73102).